The following is a 127-amino-acid chain: Aspartate 1-decarboxylase (127 aa).

Ser-25 functions as the Schiff-base intermediate with substrate; via pyruvic acid in the catalytic mechanism. The residue at position 25 (Ser-25) is a Pyruvic acid (Ser). A substrate-binding site is contributed by Thr-57. The active-site Proton donor is Tyr-58. Residue 73 to 75 coordinates substrate; sequence GAA.

The protein belongs to the PanD family. Heterooctamer of four alpha and four beta subunits. Requires pyruvate as cofactor. Post-translationally, is synthesized initially as an inactive proenzyme, which is activated by self-cleavage at a specific serine bond to produce a beta-subunit with a hydroxyl group at its C-terminus and an alpha-subunit with a pyruvoyl group at its N-terminus.

The protein localises to the cytoplasm. It carries out the reaction L-aspartate + H(+) = beta-alanine + CO2. It participates in cofactor biosynthesis; (R)-pantothenate biosynthesis; beta-alanine from L-aspartate: step 1/1. In terms of biological role, catalyzes the pyruvoyl-dependent decarboxylation of aspartate to produce beta-alanine. This Listeria monocytogenes serotype 4b (strain CLIP80459) protein is Aspartate 1-decarboxylase.